Reading from the N-terminus, the 533-residue chain is Probable ribonuclease ZC3H12D (533 aa).

The region spanning 92–246 is the RNase NYN domain; it reads LRPIVIDGSN…PLGRRGPTLS (155 aa). A C3H1-type zinc finger spans residues 251–282; the sequence is KKPRPPEPSWQHCPYGKKCTYGVKCRFYHPER. Residues 262 to 368 are necessary for interaction with ZC3H12A; that stretch reads HCPYGKKCTY…ASGVVSQSRG (107 aa). The segment at 302–335 is disordered; sequence LGGGAEEPRTPSARSRPTTARLLPQEPGEHDLPP.

Belongs to the ZC3H12 family. As to quaternary structure, interacts with ZC3H12A. Mg(2+) serves as cofactor. In terms of tissue distribution, expressed at low levels in bone marrow derived macrophages.

It is found in the cytoplasm. Its subcellular location is the P-body. Functionally, may regulate cell growth likely by suppressing RB1 phosphorylation. May function as RNase and regulate the levels of target RNA species (Potential). In association with ZC3H12A enhances the degradation of interleukin IL-6 mRNA level in activated macrophages. Serve as a tumor suppressor in certain leukemia cells. Overexpression inhibits the G1 to S phase progression through suppression of RB1 phosphorylation. This Mus musculus (Mouse) protein is Probable ribonuclease ZC3H12D.